Reading from the N-terminus, the 220-residue chain is ATP synthase subunit beta, chloroplastic (220 aa).

This sequence belongs to the ATPase alpha/beta chains family. As to quaternary structure, F-type ATPases have 2 components, CF(1) - the catalytic core - and CF(0) - the membrane proton channel. CF(1) has five subunits: alpha(3), beta(3), gamma(1), delta(1), epsilon(1). CF(0) has four main subunits: a(1), b(1), b'(1) and c(9-12).

Its subcellular location is the plastid. It localises to the chloroplast thylakoid membrane. The enzyme catalyses ATP + H2O + 4 H(+)(in) = ADP + phosphate + 5 H(+)(out). Produces ATP from ADP in the presence of a proton gradient across the membrane. The catalytic sites are hosted primarily by the beta subunits. The chain is ATP synthase subunit beta, chloroplastic (atpB) from Osmundastrum cinnamomeum (Cinnamon fern).